The sequence spans 403 residues: Adenylate cyclase (403 aa).

Positions 1 to 16 (MSTEHTNTPRADSPQS) are enriched in polar residues. Residues 1–37 (MSTEHTNTPRADSPQSAAEAVRGARQHAPAATPAESD) form a disordered region. The segment at 31 to 60 (ATPAESDPILELAEAMEGPLRIPAHTPEAV) is pyruvate binding. Residues 238 to 347 (AVGFADLVSY…PTVNMAARLT (110 aa)) enclose the Guanylate cyclase domain. Residues D243 and D287 each coordinate Mg(2+).

Belongs to the adenylyl cyclase class-3 family. In terms of assembly, homodimer. The cofactor is Mg(2+).

The protein localises to the cytoplasm. It catalyses the reaction ATP = 3',5'-cyclic AMP + diphosphate. Its activity is regulated as follows. Pyruvate-stimulated. In terms of biological role, plays essential roles in regulation of cellular metabolism by catalyzing the synthesis of a second messenger, cAMP. The sequence is that of Adenylate cyclase (cya) from Glutamicibacter nicotianae (Arthrobacter nicotianae).